The following is a 298-amino-acid chain: Syntaxin-4 (298 aa).

Residues 1-274 (MRDRTHELRQ…NQKKARKKKV (274 aa)) lie on the Cytoplasmic side of the membrane. Residues S15, S29, S36, S117, S208, and S248 each carry the phosphoserine modification. Positions 38-163 (DDEFFQKVQT…ERIRRQLKIT (126 aa)) form a coiled coil. The interaction with CENPF stretch occupies residues 154-298 (ERIRRQLKIT…VIIGITITVG (145 aa)). The 63-residue stretch at 200-262 (LNEISARHSE…ERGQEHVKIA (63 aa)) folds into the t-SNARE coiled-coil homology domain. The helical; Anchor for type IV membrane protein transmembrane segment at 275 to 295 (MIAICVSVTVLILAVIIGITI) threads the bilayer. Residues 296-298 (TVG) are Extracellular-facing.

Belongs to the syntaxin family. In terms of assembly, interacts with STXBP6. Component of the SNARE complex composed of STX4, SNAP23 and VAMP7 that interacts with SYT7 during lysosomal exocytosis. Found in a complex with VAMP8 and SNAP23. Detected in a complex with SNAP23 and STXBP4. Interacts with VAMP2. Interacts with SNAP23 and SNAPIN. Interacts with LLGL1. Interacts (via C-terminus) with CENPF. Interacts with DOC2B. Interacts with STXBP3; excludes interaction with DOC2B and SNAP25. Interacts with STXBP4; excludes interaction with VAMP2. Interacts with STXBP5L. As to expression, expressed in the outer and inner hair cells of the cochlea.

It is found in the cell membrane. Its subcellular location is the cell projection. The protein localises to the neuron projection. It localises to the stereocilium. Functionally, plasma membrane t-SNARE that mediates docking of transport vesicles. Necessary for the translocation of SLC2A4 from intracellular vesicles to the plasma membrane. In neurons, recruited at neurite tips to membrane domains rich in the phospholipid 1-oleoyl-2-palmitoyl-PC (OPPC) which promotes neurite tip surface expression of the dopamine transporter SLC6A3/DAT by facilitating fusion of SLC6A3-containing transport vesicles with the plasma membrane. Together with STXB3 and VAMP2, may also play a role in docking/fusion of intracellular GLUT4-containing vesicles with the cell surface in adipocytes and in docking of synaptic vesicles at presynaptic active zones. Required for normal hearing. This Mus musculus (Mouse) protein is Syntaxin-4 (Stx4).